A 354-amino-acid polypeptide reads, in one-letter code: MAELQNDRFLRALLKEPVDQTPVWMMRQAGRYLPEYRATRKQAGSFMDLCRNKELACEVTLQPLERYPLDAAILFSDILTIPDAMGLELRFQTGEGPIFDKPIKSMSDAKKLFVPDMASELGYVMDAVSTIRKALDGRVPLIGFSGSPWTLATYMVEGGSSKTFAKIKAMMYDQPATLHHILDVLADSVIAYLNAQIEAGAQAVQIFDTWGGVLTPRDYKEFSLNYMAKIVDGLKRENDGRKVPVILFTKGGGQWLESMAETGCDALGLDWTTDIDDARARVGDKVALQGNMDPSVLYASPDRIREEVATILEKYGQGTGHVFNLGHGIHPEIDPEHAGAFIKAVTELSPKYHK.

Substrate-binding positions include 27-31, Asp-77, Tyr-154, Thr-209, and His-327; that span reads RQAGR.

This sequence belongs to the uroporphyrinogen decarboxylase family. As to quaternary structure, homodimer.

The protein resides in the cytoplasm. The catalysed reaction is uroporphyrinogen III + 4 H(+) = coproporphyrinogen III + 4 CO2. The protein operates within porphyrin-containing compound metabolism; protoporphyrin-IX biosynthesis; coproporphyrinogen-III from 5-aminolevulinate: step 4/4. Functionally, catalyzes the decarboxylation of four acetate groups of uroporphyrinogen-III to yield coproporphyrinogen-III. The polypeptide is Uroporphyrinogen decarboxylase (Hydrogenovibrio crunogenus (strain DSM 25203 / XCL-2) (Thiomicrospira crunogena)).